The following is a 277-amino-acid chain: Sulfur carrier protein FdhD (277 aa).

Cysteine 123 serves as the catalytic Cysteine persulfide intermediate.

Belongs to the FdhD family.

The protein localises to the cytoplasm. Functionally, required for formate dehydrogenase (FDH) activity. Acts as a sulfur carrier protein that transfers sulfur from IscS to the molybdenum cofactor prior to its insertion into FDH. The sequence is that of Sulfur carrier protein FdhD from Pectobacterium atrosepticum (strain SCRI 1043 / ATCC BAA-672) (Erwinia carotovora subsp. atroseptica).